Here is a 998-residue protein sequence, read N- to C-terminus: DNA damage-induced apoptosis suppressor protein (998 aa).

The interval 815-834 (DKQQASPSCPKNIKTPSQKI) is disordered. The segment covering 817–834 (QQASPSCPKNIKTPSQKI) has biased composition (polar residues).

In terms of tissue distribution, highly expressed in colorectal and lung cancer tissues.

The protein resides in the cytoplasm. It localises to the nucleus. Functionally, may be an anti-apoptotic protein involved in DNA repair or cell survival. The protein is DNA damage-induced apoptosis suppressor protein (DDIAS) of Homo sapiens (Human).